The primary structure comprises 256 residues: Fructose-1,6-bisphosphatase/inositol-1-monophosphatase (256 aa).

The Mg(2+) site is built by Glu67, Asp83, Leu85, and Asp86. Substrate is bound by residues 86 to 88 (DGS), Arg170, Ile175, and Arg194. Residue Asp201 participates in Mg(2+) binding.

This sequence belongs to the inositol monophosphatase superfamily. FBPase class 4 family. In terms of assembly, homodimer. It depends on Mg(2+) as a cofactor.

It carries out the reaction beta-D-fructose 1,6-bisphosphate + H2O = beta-D-fructose 6-phosphate + phosphate. The catalysed reaction is a myo-inositol phosphate + H2O = myo-inositol + phosphate. In terms of biological role, phosphatase with broad specificity; it can dephosphorylate fructose 1,6-bisphosphate (FBP) and inositol-1-phosphate (IMP). However, while possessing a high FBPase activity in vitro, does not participate in gluconeogenesis in vivo. The sequence is that of Fructose-1,6-bisphosphatase/inositol-1-monophosphatase (suhB) from Thermococcus kodakarensis (strain ATCC BAA-918 / JCM 12380 / KOD1) (Pyrococcus kodakaraensis (strain KOD1)).